A 255-amino-acid chain; its full sequence is 3-dehydroquinate dehydratase (255 aa).

3-dehydroquinate-binding positions include 47 to 49 and R83; that span reads EWR. H145 functions as the Proton donor/acceptor in the catalytic mechanism. The Schiff-base intermediate with substrate role is filled by K172. 3 residues coordinate 3-dehydroquinate: R215, S234, and Q238.

This sequence belongs to the type-I 3-dehydroquinase family. As to quaternary structure, homodimer.

It catalyses the reaction 3-dehydroquinate = 3-dehydroshikimate + H2O. The protein operates within metabolic intermediate biosynthesis; chorismate biosynthesis; chorismate from D-erythrose 4-phosphate and phosphoenolpyruvate: step 3/7. In terms of biological role, involved in the third step of the chorismate pathway, which leads to the biosynthesis of aromatic amino acids. Catalyzes the cis-dehydration of 3-dehydroquinate (DHQ) and introduces the first double bond of the aromatic ring to yield 3-dehydroshikimate. The protein is 3-dehydroquinate dehydratase of Clostridium kluyveri (strain NBRC 12016).